Here is a 644-residue protein sequence, read N- to C-terminus: Forkhead box protein O (644 aa).

The interval 39–75 is disordered; sequence FEPQTRARSNTWPCPRPENFVEPPDELDSTKASNQQL. Threonine 49 bears the Phosphothreonine; by PKB/AKT1 mark. Position 80 is a phosphoserine (serine 80). Positions 100–206 form a DNA-binding region, fork-head; that stretch reads WGNLSYADLI…ETSRYEKRRG (107 aa). 5 disordered regions span residues 187 to 210, 222 to 276, 329 to 386, 412 to 435, and 578 to 612; these read KSVR…RAKK, GLND…SPIR, QQQQ…QTLQ, SPNS…DSLN, and QQHL…NSSL. A Phosphoserine; by PKB/AKT1 modification is found at serine 195. Polar residues-rich tracts occupy residues 226-235 and 261-270; these read ATPSPSSSVS and RASSNASSCG. Serine 264 bears the Phosphoserine; by PKB/AKT1 mark. A phosphoserine mark is found at serine 267, serine 268, and serine 273. A compositionally biased stretch (low complexity) spans 329–340; it reads QQQQQQQQQQQQ. Pro residues predominate over residues 350–359; the sequence is SQPPPPPYQP. Residues 360 to 374 show a composition bias toward low complexity; the sequence is PQLQQQQQQQPSYSL. The segment covering 412-421 has biased composition (polar residues); that stretch reads SPNSVTTTMS.

In terms of assembly, interacts with melt.

Its subcellular location is the cytoplasm. It localises to the nucleus. In terms of biological role, transcription factor involved in the regulation of the insulin signaling pathway. Consistently activates both the downstream target Thor\d4EBP and the feedback control target InR. Involved in negative regulation of the cell cycle, modulating cell growth and proliferation. In response to cellular stresses, such as nutrient deprivation or increased levels of reactive oxygen species, foxo is activated and inhibits growth through the action of target genes such as Thor. Foxo activated in the adult fat body can regulate lifespan in adults; an insulin peptide itself may function as one secondary messenger of insulin-regulated aging. Also regulates Lip4, homolog of human acid lipases, thereby acting as a key modulator of lipid metabolism by insulin signaling and integrates insulin responses to glucose and lipid homeostasis. The polypeptide is Forkhead box protein O (Drosophila pseudoobscura pseudoobscura (Fruit fly)).